The primary structure comprises 379 residues: Cytochrome b (379 aa).

4 helical membrane-spanning segments follow: residues 33-53, 77-98, 113-133, and 178-198; these read FGSL…FLAM, WLIR…YLHI, WNIG…GYVL, and FFAF…IHLL. His-83 and His-97 together coordinate heme b. 2 residues coordinate heme b: His-182 and His-196. Residue His-201 coordinates a ubiquinone. The next 4 membrane-spanning stretches (helical) occupy residues 226–246, 288–308, 320–340, and 347–367; these read YKDL…ALFY, LGGV…PILH, ASQL…WIGG, and YIII…VLNP.

Belongs to the cytochrome b family. The cytochrome bc1 complex contains 3 respiratory subunits (MT-CYB, CYC1 and UQCRFS1), 2 core proteins (UQCRC1 and UQCRC2) and probably 6 low-molecular weight proteins. Heme b is required as a cofactor.

It localises to the mitochondrion inner membrane. Component of the ubiquinol-cytochrome c reductase complex (complex III or cytochrome b-c1 complex) that is part of the mitochondrial respiratory chain. The b-c1 complex mediates electron transfer from ubiquinol to cytochrome c. Contributes to the generation of a proton gradient across the mitochondrial membrane that is then used for ATP synthesis. The polypeptide is Cytochrome b (mt-cyb) (Anguilla reinhardtii (Speckled longfin eel)).